Consider the following 505-residue polypeptide: Maturase K (505 aa).

The protein belongs to the intron maturase 2 family. MatK subfamily.

It is found in the plastid. Its subcellular location is the chloroplast. Functionally, usually encoded in the trnK tRNA gene intron. Probably assists in splicing its own and other chloroplast group II introns. The sequence is that of Maturase K from Barclaya longifolia (Orchid lily).